A 220-amino-acid polypeptide reads, in one-letter code: Iron-sulfur cluster repair protein YtfE (220 aa).

It belongs to the RIC family. YtfE subfamily. Homodimer.

Its subcellular location is the cytoplasm. Functionally, di-iron-containing protein involved in the repair of iron-sulfur clusters damaged by oxidative and nitrosative stress conditions. This Salmonella paratyphi A (strain AKU_12601) protein is Iron-sulfur cluster repair protein YtfE.